Here is a 293-residue protein sequence, read N- to C-terminus: 4-diphosphocytidyl-2-C-methyl-D-erythritol kinase (293 aa).

Residue K16 is part of the active site. 99 to 109 (PMGAGLGGGSS) is a binding site for ATP. The active site involves D141.

This sequence belongs to the GHMP kinase family. IspE subfamily.

The enzyme catalyses 4-CDP-2-C-methyl-D-erythritol + ATP = 4-CDP-2-C-methyl-D-erythritol 2-phosphate + ADP + H(+). The protein operates within isoprenoid biosynthesis; isopentenyl diphosphate biosynthesis via DXP pathway; isopentenyl diphosphate from 1-deoxy-D-xylulose 5-phosphate: step 3/6. Functionally, catalyzes the phosphorylation of the position 2 hydroxy group of 4-diphosphocytidyl-2C-methyl-D-erythritol. The protein is 4-diphosphocytidyl-2-C-methyl-D-erythritol kinase of Burkholderia mallei (strain NCTC 10247).